A 259-amino-acid polypeptide reads, in one-letter code: Probable UMP-CMP kinase 2 (259 aa).

Residue glycine 63–threonine 68 participates in ATP binding. The tract at residues serine 83–valine 112 is NMP. A ribonucleoside 5'-phosphate-binding positions include arginine 89, lysine 110–valine 112, and glycine 137–arginine 140. CMP is bound at residue asparagine 144. The segment at asparagine 175–aspartate 183 is LID. Arginine 176 contacts ATP. A ribonucleoside 5'-phosphate-binding residues include arginine 180 and arginine 191. Position 219 (glycine 219) interacts with ATP.

It belongs to the adenylate kinase family. UMP-CMP kinase subfamily. In terms of assembly, monomer. Requires Mg(2+) as cofactor.

Its subcellular location is the cytoplasm. The protein localises to the nucleus. It catalyses the reaction CMP + ATP = CDP + ADP. The enzyme catalyses dCMP + ATP = dCDP + ADP. It carries out the reaction UMP + ATP = UDP + ADP. Its function is as follows. Catalyzes the phosphorylation of pyrimidine nucleoside monophosphates at the expense of ATP. Plays an important role in de novo pyrimidine nucleotide biosynthesis. Has preference for UMP and CMP as phosphate acceptors. This Arabidopsis thaliana (Mouse-ear cress) protein is Probable UMP-CMP kinase 2 (UMK2).